The following is a 364-amino-acid chain: Probable methyltransferase ICS2 (364 aa).

The S-adenosyl-L-homocysteine site is built by Tyr-18, Cys-61, Asp-98, Leu-99, Ser-133, and Phe-134. 4 residues coordinate Mg(2+): Asn-172, Asp-258, Phe-260, and Asn-261.

It belongs to the methyltransferase superfamily. Type-7 methyltransferase family. Requires Mg(2+) as cofactor.

Its function is as follows. No detectable N-methyltransferase activity. In Camellia irrawadiensis (Burmese tea), this protein is Probable methyltransferase ICS2.